The primary structure comprises 384 residues: Potassium channel subfamily K member 18 (384 aa).

The Cytoplasmic segment spans residues 1–23 (MEVSGHPQARRCCPEALGKLFPG). Residues 24 to 44 (LCFLCFLVTYALVGAVVFSAI) traverse the membrane as a helical segment. N-linked (GlcNAc...) asparagine glycosylation is present at N70. Residues 103 to 129 (FLSSLFFCCTVFSTVGYGYIYPVTRLG) constitute an intramembrane region (pore-forming). The K(+) site is built by T116, V117, G118, and Y119. The segment at 116 to 121 (TVGYGY) is selectivity filter 1. The chain crosses the membrane as a helical span at residues 130–148 (KYLCMLYALFGIPLMFLVL). The Cytoplasmic portion of the chain corresponds to 149 to 280 (TDTGDILATI…EVGQQVERLD (132 aa)). Residues 200 to 205 (PQIIIS) are interaction with calcineurin. The tract at residues 249-254 (RSNSCP) is interaction with YWHAH. Phosphoserine occurs at positions 252 and 264. The helical transmembrane segment at 281-301 (IPLPIIALIVFAYISCAAAIL) threads the bilayer. The segment at residues 314–328 (FYFCFVTLTTIGFGD) is an intramembrane region (pore-forming). The selectivity filter 2 stretch occupies residues 323 to 328 (TIGFGD). Residues 335 to 355 (NFFLFFSIYIIVGMEIVFIAF) form a helical membrane-spanning segment. Topologically, residues 356-384 (KLVQNRLIDIYKNVMLFFAKGKFYHLVKK) are cytoplasmic.

Belongs to the two pore domain potassium channel (TC 1.A.1.8) family. In terms of assembly, homodimer. Heterodimer with KCNK2. Heterodimer with KCNK10. Interacts with calcineurin. Interacts with YWHAH, in a phosphorylation-dependent manner. N-glycosylated. Post-translationally, phosphorylation of Ser-264 is required for the binding of 14-3-3eta/YWHAH. Calcineurin-mediated dephosphorylation enhances channel activity. Expressed in dorsal root ganglion and trigeminal ganglion neurons. Detected at low levels in spinal cord. Expressed in regulatory T cells (at protein level).

Its subcellular location is the cell membrane. The catalysed reaction is K(+)(in) = K(+)(out). With respect to regulation, activated by volatile anesthetics but inhibited by amide local anesthetics. Inhibited by Ba(2+) ions. Inhibited by free polyunsaturated fatty acids. Channel conductance is sensitive to intracellular pH, it decreases at acidic pH and increases at basic pH. In contrast to its mouse ortholog, it is not regulated by extracellular protons. Insensitive to changes in temperature. Its function is as follows. K(+) channel that conducts outward and inward rectifying currents at depolarized and hyperpolarized membrane potentials, respectively. The outward rectifying currents are voltage-dependent, coupled to K(+) electrochemical gradient across the membrane, whereas the inward currents can be induced in response to activation of Ca(2+)-mobilizing receptors. Homo- and heterodimerizes to form functional channels with distinct regulatory and gating properties. In trigeminal ganglia sensory neurons, the heterodimers of KCNK18/TRESK and KCNK2/TREK-1 or KCNK10/TREK-2 inhibit neuronal firing and neurogenic inflammation by stabilizing the resting membrane potential at K(+) equilibrium potential as well as by regulating the threshold of action potentials and the spike frequency. In thymocytes, conducts K(+) currents upon T cell receptor (TCR) signaling leading to sustained Ca(2+) influx and NF-kappa-B activation, FOXP3 transcription and positive selection of regulatory T cell (Treg) progenitor subsets. Appears to mediate the analgesics effects of hydroxy-alpha-sanshool, a metabolite naturally present in Schezuan pepper and other Xanthoxylum plants. The chain is Potassium channel subfamily K member 18 from Homo sapiens (Human).